Reading from the N-terminus, the 4171-residue chain is Cytoplasmic dynein 2 heavy chain 1 (4171 aa).

A stem region spans residues 1 to 1598 (MSSDSKDQRK…VLRQVSSEFE (1598 aa)). 115-122 (GKELTEGN) contacts ATP. Coiled-coil stretches lie at residues 164–203 (ANDYNEAFKQLQLLVETMEERSIDELSELVECFEDTCDEL), 629–693 (KQLE…KEEE), 829–861 (DLEELIEENLKTAADWESQFKILKGKAREAERL), 927–1048 (EIAE…KEKR), and 1354–1383 (SRQSLKKSLEQIVDQLNRCQKALNQFLEQK). 4 AAA regions span residues 1599 to 1823 (YTYE…VLGG), 1883 to 2100 (EPLG…VRSH), 2184 to 2432 (VTKE…WVVS), and 2527 to 2767 (RFAF…PIKY). ATP is bound by residues 1637 to 1644 (GPAGTGKT), 1921 to 1928 (GAAGSGKS), 2226 to 2233 (GTTGCGKQ), and 2565 to 2572 (GRPGFGRR). Residues 2776–3064 (QLLGYKRLTL…VDLDREQDTI (289 aa)) form a stalk region. Coiled-coil stretches lie at residues 2790-2877 (ERLK…KEVQ), 2999-3059 (EKIA…DLDR), and 3308-3336 (ELEERSSSLLRDAELKKLELEGLEQLLLQ). 2 AAA regions span residues 3140-3367 (ASLE…IITK) and 3575-3784 (LMDF…FVEQ).

The protein belongs to the dynein heavy chain family. As to quaternary structure, the cytoplasmic dynein complex 2 is probably composed by a heavy chain che-3 homodimer and a number of light intermediate chains.

The protein resides in the cell projection. The protein localises to the cilium membrane. Its subcellular location is the cytoplasm. It localises to the cytoskeleton. Functionally, functions as a motor for intraflagellar retrograde transport in chemosensory neurons. Functions in cilia biogenesis. The protein is Cytoplasmic dynein 2 heavy chain 1 of Caenorhabditis elegans.